A 751-amino-acid polypeptide reads, in one-letter code: FAD-dependent monooxygenase atnA (751 aa).

A helical transmembrane segment spans residues 8–28 (LIVGGGVAGLSLAIMLEAYGF). Residues glutamate 34, glycine 48, and arginine 109 each coordinate FAD. Tyrosine 218 is an active-site residue. The FAD site is built by aspartate 311 and alanine 324. 8 helical membrane passes run 446 to 466 (PLAT…PWSV), 481 to 501 (SEVF…LWVI), 508 to 528 (LLIS…YWGW), 563 to 583 (ALLP…ALAS), 590 to 610 (DWWP…STFL), 639 to 659 (IAVV…AALL), 663 to 683 (IISL…ALIV), and 706 to 726 (AWAV…LAGA).

Belongs to the paxM FAD-dependent monooxygenase family. The cofactor is FAD.

It is found in the membrane. It functions in the pathway secondary metabolite biosynthesis; terpenoid biosynthesis. FAD-dependent monooxygenase; part of the gene cluster that mediates the biosynthesis of the meroterpenoids arthripenoids. The pathway begins with the HR-PKS atnH that catalyzes two chain-extension steps to form a reduced triketide, which then primes the SAT domain in the NR-PKS atnG to initiate three more cycles of extension to give a linear hexaketide corresponding to the polyketide part of arthripenoids. The FAD-dependent monooxygenase atnJ then performs an oxidative decarboxylation at C11 of the atnH/atnG product, via an electrophilic aromatic hydroxylation with concomitant ipso-decarboxylation. The membrane-bound polyprenyl transferase atnF then introduces a farnesyl group before the FAD-dependent monooxygenase atnK functions as the first epoxidase on terminal C12'-C13' olefin, followed by a second epoxidation on C7'-C8' catalyzed by atnA. The terpene cyclase/mutase atnI then initiates the sequential tricyclic ring formation through protonation of the terminal epoxide and catalyzes the regioselective and stereoselective 6/6/6-tricyclic ring formation. The cytochrome P450 monooxygenase atnM is responsible for hydroxylating both C1' and C10'. The next steps may involve ketoreduction and acetyl transfer by the ketoreductase atnB and the acetyltransferase atnC, and lead to the production of arthripenoid B, the final biosynthetic product of the atn cluster. The hydroquinone moiety in arthripenoid B is prone to undergo spontaneous oxidation to afford a benzoquinone compound, a key intermediate for generating structure diversity. For instance, addition of a cysteine followed by ring contraction gives arthripenoid A, tautomerization gives the main product arthripenoid C, addition of a molecular of water or amine affords arthripenoid D or E, respectively, and loss of one water forms arthripenoid F. In Arthrinium sp, this protein is FAD-dependent monooxygenase atnA.